Here is a 316-residue protein sequence, read N- to C-terminus: WEB family protein At3g13190 (316 aa).

3 coiled-coil regions span residues 42-90 (WNKE…MIND), 119-195 (EEES…AEEH), and 233-266 (RDET…MAQE). The interval 295–316 (STKEVLKSKPRSSSKEGCLVKC) is disordered.

The protein belongs to the WEB family.

This is WEB family protein At3g13190 from Arabidopsis thaliana (Mouse-ear cress).